The primary structure comprises 397 residues: Phosphoglycerate kinase (397 aa).

Residues 21–23 (DFN), arginine 36, 59–62 (HLGR), arginine 119, and arginine 156 each bind substrate. ATP contacts are provided by residues lysine 207, glycine 295, glutamate 326, and 353–356 (GGDS).

This sequence belongs to the phosphoglycerate kinase family. As to quaternary structure, monomer.

It is found in the cytoplasm. The catalysed reaction is (2R)-3-phosphoglycerate + ATP = (2R)-3-phospho-glyceroyl phosphate + ADP. The protein operates within carbohydrate degradation; glycolysis; pyruvate from D-glyceraldehyde 3-phosphate: step 2/5. This chain is Phosphoglycerate kinase, found in Enterococcus faecalis (strain ATCC 700802 / V583).